We begin with the raw amino-acid sequence, 723 residues long: Probable dipeptidyl-peptidase 5 (723 aa).

Residues 1–19 (MAALRWLSAVVAVSTTVLA) form the signal peptide. 6 N-linked (GlcNAc...) asparagine glycosylation sites follow: asparagine 79, asparagine 97, asparagine 154, asparagine 255, asparagine 381, and asparagine 451. Catalysis depends on serine 561, which acts as the Charge relay system. An N-linked (GlcNAc...) asparagine glycan is attached at asparagine 608. Catalysis depends on charge relay system residues aspartate 644 and histidine 676.

This sequence belongs to the peptidase S9C family.

Its subcellular location is the secreted. Its function is as follows. Extracellular dipeptidyl-peptidase which removes N-terminal dipeptides sequentially from polypeptides having unsubstituted N-termini. The polypeptide is Probable dipeptidyl-peptidase 5 (dpp5) (Aspergillus terreus (strain NIH 2624 / FGSC A1156)).